Here is a 544-residue protein sequence, read N- to C-terminus: MSTSSLAFLKAKACAEIVAELIASENQNKVINLNALKMRISKKHQLSESPRLTDIIAAIPPDAYLKESLMRKLRAKPVRTASGIAVVAVMCKPHRCPHIAMTGNVCVYCPGGPDSDFEYSTQSYTGYEPTSMRAIRARYDPYEQARGRVEQLRSLGHTVDKVEYIIMGGTFMSLPESYRHTFIANLHNALSGATTEDLDEAVKFSEQSETKCVGITIETRPDYCLDQHLDEMLRYGCTRLEIGVQSVYEDVARDTNRGHTVKAVCETFQLAKDTGYKVVTHMMPDLPNVGMERDIFQFQEYFENPAFRTDGLKLYPTLVIRGTGLYELWKTGRYKNYTPNALVDLIARILALVPPWTRIYRIQRDIPMPLVSSGVETGNLRELALNRMRDLGTKCRDIRAREVGMQEVHHKIHPEQVELLRRDYTANGGWETFLSYEDPKQDILIGLLRLRQCSDKTYRPEFTSQPTSLVRELHVYGSAVPVHSRDPKKFQHQGFGTLLLEEAERIAKYEHGSKKISVISGVGVRKYYQKLGYTLDGPYMSKWL.

Residues 79–369 form the Radical SAM core domain; it reads RTASGIAVVA…YRIQRDIPMP (291 aa). Residues Cys96, Cys106, and Cys109 each contribute to the [4Fe-4S] cluster site. Acetyl-CoA contacts are provided by residues Lys161, 472–475, 495–497, and Tyr528; these read ELHV and FGT. The region spanning 393–544 is the N-acetyltransferase domain; the sequence is TKCRDIRARE…LDGPYMSKWL (152 aa).

This sequence belongs to the ELP3 family. In terms of assembly, component of the elongator complex. It depends on [4Fe-4S] cluster as a cofactor.

The protein resides in the cytoplasm. It carries out the reaction uridine(34) in tRNA + acetyl-CoA + S-adenosyl-L-methionine + H2O = 5-(carboxymethyl)uridine(34) in tRNA + 5'-deoxyadenosine + L-methionine + CoA + 2 H(+). The protein operates within tRNA modification; 5-methoxycarbonylmethyl-2-thiouridine-tRNA biosynthesis. Functionally, catalytic tRNA acetyltransferase subunit of the elongator complex which is required for multiple tRNA modifications, including mcm5U (5-methoxycarbonylmethyl uridine), mcm5s2U (5-methoxycarbonylmethyl-2-thiouridine), and ncm5U (5-carbamoylmethyl uridine). In the elongator complex, acts as a tRNA uridine(34) acetyltransferase, which mediates formation of carboxymethyluridine in the wobble base at position 34 in tRNAs. This Schizosaccharomyces pombe (strain 972 / ATCC 24843) (Fission yeast) protein is Elongator complex protein 3.